The chain runs to 597 residues: Protein GRISEA (597 aa).

A DNA-binding region (copper-fist) is located at residues 1–41 (MPIINGQKMACGPCIRGHRSTKCNHYNERVMVPVRKPGRPL). Zn(2+) is bound by residues C11, C14, C23, and H25. 4 disordered regions span residues 70–115 (PAGT…ASRR), 233–352 (AFVD…PGFG), 407–428 (SRPPTQQQHETPISATAPNGNN), and 467–541 (SPNS…SPAL). The span at 92–103 (SPASRTSSNRVT) shows a compositional bias: polar residues. Residues 104–115 (KSGSGSKSASRR) are compositionally biased toward low complexity. Gly residues predominate over residues 269 to 281 (GGSGGGGCCGGGK). Over residues 287–314 (QAPPPVPAPLPTPPQQQMPNIMPPPQPQ) the composition is skewed to pro residues. A compositionally biased stretch (low complexity) spans 469–495 (NSSHGNSGSADSSANASPSANPLNLAS). The segment covering 521-530 (ANESDGSSNA) has biased composition (polar residues).

The protein localises to the nucleus. Its function is as follows. Copper-sensing transcription factor that regulates copper uptake by transactivation of Ctr3, a high affinity copper permease. Binds to the palindromic UAS sequence 5'-TGTTGCTCANNNNAGAGCAACT-3'. Also transactivates Sod2, a mitochondrial manganese superoxide dismutase through the palindromic UAS sequence 5'-GTTTGCTCA-3' with 352 bp separating the two inverted repeats. Loss of function indirectly leads to rearrangement of mitochondrial DNA associated with senescence in wild-type strains. The protein is Protein GRISEA of Podospora anserina (Pleurage anserina).